A 254-amino-acid chain; its full sequence is Cell wall biogenesis protein NCW2 (254 aa).

Residues 1-17 (MKACSILFTTLITLAAA) form the signal peptide. Disordered stretches follow at residues 19–57 (KDSG…SAST), 111–143 (TSTA…DGPV), and 167–191 (ATTD…SSTK). The span at 27–42 (QNSEDSSQKESSNSQE) shows a compositional bias: low complexity. The span at 43-57 (ITPTTTKEAQESAST) shows a compositional bias: polar residues. Positions 111–139 (TSTASVQPTGETSSGITNSASSSTTSTST) are enriched in low complexity. Residue N229 is glycosylated (N-linked (GlcNAc...) asparagine). N232 carries GPI-anchor amidated asparagine lipidation. Residues 233–254 (GAFAGTHIAYGAGAFAVGALLL) constitute a propeptide, removed in mature form.

Its subcellular location is the cell membrane. In terms of biological role, cell wall biogenesis protein that participates in the organization of the beta-glucan assembly. Involved in the mechanism responsible for cell tolerance to polyhexamethylene biguanide (PHMB), an antifungal agent. The chain is Cell wall biogenesis protein NCW2 from Saccharomyces cerevisiae (strain ATCC 204508 / S288c) (Baker's yeast).